We begin with the raw amino-acid sequence, 501 residues long: uncharacterized protein (501 aa).

The active-site Proton donor is Glu-236. Glu-333 (nucleophile) is an active-site residue.

This sequence belongs to the glycosyl hydrolase 5 (cellulase A) family.

It is found in the mitochondrion intermembrane space. This is an uncharacterized protein from Saccharomyces cerevisiae (strain ATCC 204508 / S288c) (Baker's yeast).